We begin with the raw amino-acid sequence, 164 residues long: MTEQANNGGAASQNEQGAQFSLQRIYVRDLSFEAPKSPEIFRQEWNPSVALDLNTKQKQLESDFYEVVLTLSVTVKTGEEVAFIAEVQQAGIFLIKGLEAAAMSHTLGAFCPNILFPYAREALDSLVTRGSFPALMLAPVNFDALYAQEMARMQSAGEAPATAH.

This sequence belongs to the SecB family. As to quaternary structure, homotetramer, a dimer of dimers. One homotetramer interacts with 1 SecA dimer.

It localises to the cytoplasm. In terms of biological role, one of the proteins required for the normal export of preproteins out of the cell cytoplasm. It is a molecular chaperone that binds to a subset of precursor proteins, maintaining them in a translocation-competent state. It also specifically binds to its receptor SecA. This is Protein-export protein SecB from Stutzerimonas stutzeri (strain A1501) (Pseudomonas stutzeri).